We begin with the raw amino-acid sequence, 68 residues long: Large ribosomal subunit protein bL35 (68 aa).

It belongs to the bacterial ribosomal protein bL35 family.

The chain is Large ribosomal subunit protein bL35 from Rickettsia typhi (strain ATCC VR-144 / Wilmington).